A 463-amino-acid chain; its full sequence is ATP-dependent protease ATPase subunit HslU (463 aa).

ATP-binding positions include valine 21, 63 to 68 (GVGKTE), aspartate 276, glutamate 341, and arginine 413.

It belongs to the ClpX chaperone family. HslU subfamily. As to quaternary structure, a double ring-shaped homohexamer of HslV is capped on each side by a ring-shaped HslU homohexamer. The assembly of the HslU/HslV complex is dependent on binding of ATP.

It is found in the cytoplasm. In terms of biological role, ATPase subunit of a proteasome-like degradation complex; this subunit has chaperone activity. The binding of ATP and its subsequent hydrolysis by HslU are essential for unfolding of protein substrates subsequently hydrolyzed by HslV. HslU recognizes the N-terminal part of its protein substrates and unfolds these before they are guided to HslV for hydrolysis. The polypeptide is ATP-dependent protease ATPase subunit HslU (Thermotoga petrophila (strain ATCC BAA-488 / DSM 13995 / JCM 10881 / RKU-1)).